Consider the following 191-residue polypeptide: Cell division protein SepF (191 aa).

A compositionally biased stretch (low complexity) spans 151–164; it reads SSSPEEASPSSVST. The disordered stretch occupies residues 151 to 191; the sequence is SSSPEEASPSSVSTEKTPQYSLGKNTTPEPAWGNSKLSAYS. Positions 165–178 are enriched in polar residues; that stretch reads EKTPQYSLGKNTTP.

Belongs to the SepF family. Homodimer. Interacts with FtsZ.

It is found in the cytoplasm. Functionally, cell division protein that is part of the divisome complex and is recruited early to the Z-ring. Probably stimulates Z-ring formation, perhaps through the cross-linking of FtsZ protofilaments. Its function overlaps with FtsA. This is Cell division protein SepF from Prochlorococcus marinus (strain MIT 9301).